The following is a 372-amino-acid chain: NAD(P)H-quinone oxidoreductase subunit 1 (372 aa).

8 consecutive transmembrane segments (helical) span residues 27 to 47, 97 to 117, 128 to 148, 176 to 196, 204 to 224, 266 to 286, 308 to 328, and 347 to 367; these read IIWLPLPMLLVLVAAVVGVLV, ILFTAGPILVLVPVILSWLIV, VGIGIFLWIALSSIQPIGLLM, LALSVLAIVLMTNSLSTIDIV, ILSWNIWRQPVGFIVFWICAL, ILSALLVSILYLGGWGFPIPV, SIGIVMTVLKAYLLVFIAILL, and FLLPISLANLLITAGLKLAFP.

This sequence belongs to the complex I subunit 1 family. As to quaternary structure, NDH-1 is composed of at least 11 different subunits.

The protein localises to the cellular thylakoid membrane. It catalyses the reaction a plastoquinone + NADH + (n+1) H(+)(in) = a plastoquinol + NAD(+) + n H(+)(out). It carries out the reaction a plastoquinone + NADPH + (n+1) H(+)(in) = a plastoquinol + NADP(+) + n H(+)(out). Its function is as follows. NDH-1 shuttles electrons from an unknown electron donor, via FMN and iron-sulfur (Fe-S) centers, to quinones in the respiratory and/or the photosynthetic chain. The immediate electron acceptor for the enzyme in this species is believed to be plastoquinone. Couples the redox reaction to proton translocation, and thus conserves the redox energy in a proton gradient. This chain is NAD(P)H-quinone oxidoreductase subunit 1, found in Prochlorococcus marinus (strain MIT 9215).